A 127-amino-acid chain; its full sequence is MAKISQDVSSSRSKARKAYFTASSVERRVLLSAPLSKELRQQYNVKSLPIRQNDEVLVVRGSKKGSEGKVNSVYRLKFAIQVDKLQKEKSNGASVPINIHPSKVVITKLHLDKDRKALIQRKGGKAE.

Belongs to the universal ribosomal protein uL24 family. In terms of assembly, component of the large ribosomal subunit. Mature ribosomes consist of a small (40S) and a large (60S) subunit. The 40S subunit contains about 32 different proteins and 1 molecule of RNA (18S). The 60S subunit contains 45 different proteins and 3 molecules of RNA (25S, 5.8S and 5S).

It localises to the cytoplasm. Its function is as follows. Component of the ribosome, a large ribonucleoprotein complex responsible for the synthesis of proteins in the cell. The small ribosomal subunit (SSU) binds messenger RNAs (mRNAs) and translates the encoded message by selecting cognate aminoacyl-transfer RNA (tRNA) molecules. The large subunit (LSU) contains the ribosomal catalytic site termed the peptidyl transferase center (PTC), which catalyzes the formation of peptide bonds, thereby polymerizing the amino acids delivered by tRNAs into a polypeptide chain. The nascent polypeptides leave the ribosome through a tunnel in the LSU and interact with protein factors that function in enzymatic processing, targeting, and the membrane insertion of nascent chains at the exit of the ribosomal tunnel. This chain is Large ribosomal subunit protein uL24, found in Candida albicans (strain SC5314 / ATCC MYA-2876) (Yeast).